Consider the following 212-residue polypeptide: Large ribosomal subunit protein uL1 (212 aa).

The protein belongs to the universal ribosomal protein uL1 family. As to quaternary structure, part of the 50S ribosomal subunit.

Its function is as follows. Binds directly to 23S rRNA. Probably involved in E site tRNA release. Functionally, protein L1 is also a translational repressor protein, it controls the translation of its operon by binding to its mRNA. In Methanobrevibacter smithii (strain ATCC 35061 / DSM 861 / OCM 144 / PS), this protein is Large ribosomal subunit protein uL1.